The primary structure comprises 710 residues: uncharacterized protein (710 aa).

Coiled coils occupy residues 273-298 and 477-528; these read LYRQ…MEEG and RYEK…VADT.

This is an uncharacterized protein from Coxiella burnetii (strain RSA 493 / Nine Mile phase I).